The following is a 456-amino-acid chain: Tyrosine phenol-lyase (456 aa).

Lys257 carries the N6-(pyridoxal phosphate)lysine modification.

This sequence belongs to the beta-eliminating lyase family. In terms of assembly, homotetramer. Pyridoxal 5'-phosphate serves as cofactor.

The enzyme catalyses L-tyrosine + H2O = phenol + pyruvate + NH4(+). This is Tyrosine phenol-lyase (tpl) from Citrobacter intermedius (Escherichia intermedia).